Consider the following 360-residue polypeptide: Phenylalanine--tRNA ligase alpha subunit (360 aa).

A Mg(2+)-binding site is contributed by Glu-260.

It belongs to the class-II aminoacyl-tRNA synthetase family. Phe-tRNA synthetase alpha subunit type 1 subfamily. Tetramer of two alpha and two beta subunits. Requires Mg(2+) as cofactor.

The protein localises to the cytoplasm. The catalysed reaction is tRNA(Phe) + L-phenylalanine + ATP = L-phenylalanyl-tRNA(Phe) + AMP + diphosphate + H(+). The chain is Phenylalanine--tRNA ligase alpha subunit from Sinorhizobium fredii (strain NBRC 101917 / NGR234).